We begin with the raw amino-acid sequence, 231 residues long: Large ribosomal subunit protein uL3 (231 aa).

Gln-151 carries the N5-methylglutamine modification.

This sequence belongs to the universal ribosomal protein uL3 family. As to quaternary structure, part of the 50S ribosomal subunit. Forms a cluster with proteins L14 and L19. Post-translationally, methylated by PrmB.

Its function is as follows. One of the primary rRNA binding proteins, it binds directly near the 3'-end of the 23S rRNA, where it nucleates assembly of the 50S subunit. In Ehrlichia canis (strain Jake), this protein is Large ribosomal subunit protein uL3.